The primary structure comprises 67 residues: ATP synthase F(0) complex subunit 8 (67 aa).

A helical transmembrane segment spans residues 8 to 24; it reads TWFTTILATITTLFILF. Residue Lys54 is modified to N6-acetyllysine; alternate. Lys54 carries the N6-succinyllysine; alternate modification. Residue Lys57 is modified to N6-acetyllysine.

The protein belongs to the ATPase protein 8 family. Component of the ATP synthase complex composed at least of ATP5F1A/subunit alpha, ATP5F1B/subunit beta, ATP5MC1/subunit c (homooctomer), MT-ATP6/subunit a, MT-ATP8/subunit 8, ATP5ME/subunit e, ATP5MF/subunit f, ATP5MG/subunit g, ATP5MK/subunit k, ATP5MJ/subunit j, ATP5F1C/subunit gamma, ATP5F1D/subunit delta, ATP5F1E/subunit epsilon, ATP5PF/subunit F6, ATP5PB/subunit b, ATP5PD/subunit d, ATP5PO/subunit OSCP. ATP synthase complex consists of a soluble F(1) head domain (subunits alpha(3) and beta(3)) - the catalytic core - and a membrane F(0) domain - the membrane proton channel (subunits c, a, 8, e, f, g, k and j). These two domains are linked by a central stalk (subunits gamma, delta, and epsilon) rotating inside the F1 region and a stationary peripheral stalk (subunits F6, b, d, and OSCP). Interacts with PRICKLE3.

The protein localises to the mitochondrion membrane. In terms of biological role, subunit 8, of the mitochondrial membrane ATP synthase complex (F(1)F(0) ATP synthase or Complex V) that produces ATP from ADP in the presence of a proton gradient across the membrane which is generated by electron transport complexes of the respiratory chain. ATP synthase complex consist of a soluble F(1) head domain - the catalytic core - and a membrane F(1) domain - the membrane proton channel. These two domains are linked by a central stalk rotating inside the F(1) region and a stationary peripheral stalk. During catalysis, ATP synthesis in the catalytic domain of F(1) is coupled via a rotary mechanism of the central stalk subunits to proton translocation. In vivo, can only synthesize ATP although its ATP hydrolase activity can be activated artificially in vitro. Part of the complex F(0) domain. The chain is ATP synthase F(0) complex subunit 8 from Talpa europaea (European mole).